The sequence spans 188 residues: dCTP deaminase (188 aa).

DCTP contacts are provided by residues 111-116 (KSTYAR), 135-137 (TLE), Q156, Y170, and Q180. E137 serves as the catalytic Proton donor/acceptor.

The protein belongs to the dCTP deaminase family. In terms of assembly, homotrimer.

It catalyses the reaction dCTP + H2O + H(+) = dUTP + NH4(+). It participates in pyrimidine metabolism; dUMP biosynthesis; dUMP from dCTP (dUTP route): step 1/2. Its function is as follows. Catalyzes the deamination of dCTP to dUTP. The protein is dCTP deaminase of Nitrosomonas europaea (strain ATCC 19718 / CIP 103999 / KCTC 2705 / NBRC 14298).